The primary structure comprises 711 residues: Long-chain-fatty-acid--CoA ligase 4 (711 aa).

A helical; Signal-anchor for type III membrane protein transmembrane segment spans residues 8–28 (LTIILLPVHLLITIYSALIFI). The Cytoplasmic portion of the chain corresponds to 29 to 711 (PWYFLTNAKK…KDIERMYGGK (683 aa)). Serine 447 carries the post-translational modification Phosphoserine.

Belongs to the ATP-dependent AMP-binding enzyme family. Mg(2+) is required as a cofactor. As to expression, abundant in steroidogenic tissues, also found in the kidney, brain and liver.

The protein localises to the mitochondrion outer membrane. It localises to the peroxisome membrane. It is found in the microsome membrane. Its subcellular location is the endoplasmic reticulum membrane. The protein resides in the cell membrane. It carries out the reaction a long-chain fatty acid + ATP + CoA = a long-chain fatty acyl-CoA + AMP + diphosphate. It catalyses the reaction (5Z,8Z,11Z,14Z)-eicosatetraenoate + ATP + CoA = (5Z,8Z,11Z,14Z)-eicosatetraenoyl-CoA + AMP + diphosphate. The enzyme catalyses 15-hydroxy-(5Z,8Z,11Z,13E)-eicosatetraenoate + ATP + CoA = 15-hydroxy-(5Z,8Z,11Z,13E)-eicosatetraenoyl-CoA + AMP + diphosphate. The catalysed reaction is 12-hydroxy-(5Z,8Z,10E,14Z)-eicosatetraenoate + ATP + CoA = 12-hydroxy-(5Z,8Z,10E,14Z)-eicosatetraenoyl-CoA + AMP + diphosphate. It carries out the reaction 5-hydroxy-(6E,8Z,11Z,14Z)-eicosatetraenoate + ATP + CoA = 5-hydroxy-(6E,8Z,11Z,14Z)-eicosatetraenoyl-CoA + AMP + diphosphate. It catalyses the reaction 5,6-epoxy-(8Z,11Z,14Z)-eicosatrienoate + ATP + CoA = 5,6-epoxy-(8Z,11Z,14Z)-eicosatrienoyl-CoA + AMP + diphosphate. The enzyme catalyses 14,15-epoxy-(5Z,8Z,11Z)-eicosatrienoate + ATP + CoA = 14,15-epoxy-(5Z,8Z,11Z)-eicosatrienoyl-CoA + AMP + diphosphate. The catalysed reaction is 11,12-epoxy-(5Z,8Z,14Z)-eicosatrienoate + ATP + CoA = 11,12-epoxy-(5Z,8Z,14Z)-eicosatrienoyl-CoA + AMP + diphosphate. It carries out the reaction 8,9-epoxy-(5Z,11Z,14Z)-eicosatrienoate + ATP + CoA = 8,9-epoxy-(5Z,11Z,14Z)-eicosatrienoyl-CoA + AMP + diphosphate. It catalyses the reaction hexadecanoate + ATP + CoA = hexadecanoyl-CoA + AMP + diphosphate. The enzyme catalyses (E)-hexadec-2-enoate + ATP + CoA = (2E)-hexadecenoyl-CoA + AMP + diphosphate. Both triacsin C and rosiglitazone inhibit arachidonoyl-CoA ligase activity. In terms of biological role, catalyzes the conversion of long-chain fatty acids to their active form acyl-CoA for both synthesis of cellular lipids, and degradation via beta-oxidation. Preferentially activates arachidonate and eicosapentaenoate as substrates. Preferentially activates 8,9-EET &gt; 14,15-EET &gt; 5,6-EET &gt; 11,12-EET. Modulates glucose-stimulated insulin secretion by regulating the levels of unesterified EETs. Modulates prostaglandin E2 secretion. The sequence is that of Long-chain-fatty-acid--CoA ligase 4 (Acsl4) from Mus musculus (Mouse).